A 149-amino-acid polypeptide reads, in one-letter code: MRAVVQRVSSSSVCVDGDIIGEIGVGFNVLIGISKDDTFEDLKYIKDKIINLRVFHDENDKMNLSLLDIKGEILVISQFTLYGDCRKGRRPNFMEAQGGEEAKKLYEEFLDLLKTSNLKVECGEFGADMKVKINNDGPVTILLDSKRNF.

The short motif at 137-138 (GP) is the Gly-cisPro motif, important for rejection of L-amino acids element.

Belongs to the DTD family. In terms of assembly, homodimer.

Its subcellular location is the cytoplasm. The enzyme catalyses glycyl-tRNA(Ala) + H2O = tRNA(Ala) + glycine + H(+). The catalysed reaction is a D-aminoacyl-tRNA + H2O = a tRNA + a D-alpha-amino acid + H(+). In terms of biological role, an aminoacyl-tRNA editing enzyme that deacylates mischarged D-aminoacyl-tRNAs. Also deacylates mischarged glycyl-tRNA(Ala), protecting cells against glycine mischarging by AlaRS. Acts via tRNA-based rather than protein-based catalysis; rejects L-amino acids rather than detecting D-amino acids in the active site. By recycling D-aminoacyl-tRNA to D-amino acids and free tRNA molecules, this enzyme counteracts the toxicity associated with the formation of D-aminoacyl-tRNA entities in vivo and helps enforce protein L-homochirality. The polypeptide is D-aminoacyl-tRNA deacylase (Clostridium beijerinckii (strain ATCC 51743 / NCIMB 8052) (Clostridium acetobutylicum)).